A 257-amino-acid polypeptide reads, in one-letter code: Imidazole glycerol phosphate synthase subunit HisF (257 aa).

Catalysis depends on residues Asp-12 and Asp-131.

The protein belongs to the HisA/HisF family. As to quaternary structure, heterodimer of HisH and HisF.

Its subcellular location is the cytoplasm. The catalysed reaction is 5-[(5-phospho-1-deoxy-D-ribulos-1-ylimino)methylamino]-1-(5-phospho-beta-D-ribosyl)imidazole-4-carboxamide + L-glutamine = D-erythro-1-(imidazol-4-yl)glycerol 3-phosphate + 5-amino-1-(5-phospho-beta-D-ribosyl)imidazole-4-carboxamide + L-glutamate + H(+). Its pathway is amino-acid biosynthesis; L-histidine biosynthesis; L-histidine from 5-phospho-alpha-D-ribose 1-diphosphate: step 5/9. IGPS catalyzes the conversion of PRFAR and glutamine to IGP, AICAR and glutamate. The HisF subunit catalyzes the cyclization activity that produces IGP and AICAR from PRFAR using the ammonia provided by the HisH subunit. This Cellvibrio japonicus (strain Ueda107) (Pseudomonas fluorescens subsp. cellulosa) protein is Imidazole glycerol phosphate synthase subunit HisF.